The sequence spans 67 residues: Large ribosomal subunit protein bL35 (67 aa).

It belongs to the bacterial ribosomal protein bL35 family.

The protein is Large ribosomal subunit protein bL35 of Acidovorax ebreus (strain TPSY) (Diaphorobacter sp. (strain TPSY)).